We begin with the raw amino-acid sequence, 425 residues long: tRNA(Ile)-lysidine synthase (425 aa).

27–32 (SGGLDS) is a binding site for ATP.

Belongs to the tRNA(Ile)-lysidine synthase family.

Its subcellular location is the cytoplasm. It catalyses the reaction cytidine(34) in tRNA(Ile2) + L-lysine + ATP = lysidine(34) in tRNA(Ile2) + AMP + diphosphate + H(+). Functionally, ligates lysine onto the cytidine present at position 34 of the AUA codon-specific tRNA(Ile) that contains the anticodon CAU, in an ATP-dependent manner. Cytidine is converted to lysidine, thus changing the amino acid specificity of the tRNA from methionine to isoleucine. This is tRNA(Ile)-lysidine synthase from Streptococcus gordonii (strain Challis / ATCC 35105 / BCRC 15272 / CH1 / DL1 / V288).